The following is a 197-amino-acid chain: Translation machinery-associated protein 22 (197 aa).

The region spanning 102–173 is the SUI1 domain; it reads VQIKRVERNK…DVKEWLLEVY (72 aa).

Belongs to the DENR family. Interacts with the 40S ribosomal subunit.

It localises to the cytoplasm. In Aspergillus niger (strain ATCC MYA-4892 / CBS 513.88 / FGSC A1513), this protein is Translation machinery-associated protein 22 (tma22).